A 390-amino-acid polypeptide reads, in one-letter code: Chorismate synthase (390 aa).

Arginine 48 is a binding site for NADP(+). Residues 126-128, glycine 286, 301-305, and arginine 328 each bind FMN; these read RAS and KPTSS.

Belongs to the chorismate synthase family. Requires FMNH2 as cofactor.

The catalysed reaction is 5-O-(1-carboxyvinyl)-3-phosphoshikimate = chorismate + phosphate. The protein operates within metabolic intermediate biosynthesis; chorismate biosynthesis; chorismate from D-erythrose 4-phosphate and phosphoenolpyruvate: step 7/7. Functionally, catalyzes the anti-1,4-elimination of the C-3 phosphate and the C-6 proR hydrogen from 5-enolpyruvylshikimate-3-phosphate (EPSP) to yield chorismate, which is the branch point compound that serves as the starting substrate for the three terminal pathways of aromatic amino acid biosynthesis. This reaction introduces a second double bond into the aromatic ring system. The protein is Chorismate synthase of Sulfurisphaera tokodaii (strain DSM 16993 / JCM 10545 / NBRC 100140 / 7) (Sulfolobus tokodaii).